The primary structure comprises 693 residues: Protein FAM13A (693 aa).

S19 carries the post-translational modification Phosphoserine. 2 disordered regions span residues 56–89 (SNAG…KKQD) and 136–233 (RSKP…VPDM). Residues 69-78 (GPSSASSIPT) show a composition bias toward polar residues. The span at 159–171 (LSMESLSSMQSQE) shows a compositional bias: low complexity. A compositionally biased stretch (basic and acidic residues) spans 184–197 (ESKEIERGGRDTQH). Residues S267 and S287 each carry the phosphoserine modification. Disordered regions lie at residues 302 to 331 (DTEV…DEQE) and 396 to 424 (ISEE…EKED). Residue S397 is modified to Phosphoserine. T402 is modified (phosphothreonine). Polar residues predominate over residues 408-418 (RSNTLPKSFGS).

Belongs to the FAM13 family. In terms of assembly, interacts with ANXA2. Expressed in the mammary gland, with similar levels at all stages of development, including pregnancy, lactation and involution.

(Microbial infection) Plays a role in the clearance of Pseudomonas aeruginosa by macrophages. In complex with ANXA2, promotes activation of Rho GTPases following P.aeruginosa infection. This Mus musculus (Mouse) protein is Protein FAM13A (Fam13a).